The chain runs to 720 residues: NAD(+) hydrolase ApTIR (720 aa).

The region spanning methionine 1–phenylalanine 131 is the TIR domain. NAD(+) is bound by residues serine 10–histidine 11 and alanine 48. Glutamate 84 is an active-site residue. The helical transmembrane segment at glycine 192 to tryptophan 211 threads the bilayer. Disordered regions lie at residues alanine 231–glutamate 275 and glutamate 292–valine 359. Composition is skewed to basic and acidic residues over residues glutamate 256–arginine 268 and alanine 307–valine 359. Positions arginine 313 to glutamine 362 form a coiled coil. WD repeat units lie at residues glycine 420–arginine 459, serine 465–arginine 504, glycine 510–arginine 549, aspartate 555–arginine 594, glycine 600–arginine 639, glycine 645–arginine 684, and glycine 690–methionine 720.

It is found in the cell membrane. The catalysed reaction is NAD(+) + H2O = ADP-D-ribose + nicotinamide + H(+). NAD(+) hydrolase (NADase) that catalyzes cleavage of NAD(+) into ADP-D-ribose (ADPR) and nicotinamide. This Actinoplanes sp. (strain ATCC 31044 / CBS 674.73 / SE50/110) protein is NAD(+) hydrolase ApTIR.